The primary structure comprises 525 residues: Adenosine deaminase AGSA (525 aa).

An N-terminal signal peptide occupies residues 1–25 (MSSFSTHNFVAIATFVCWFCCLATA). A glycan (N-linked (GlcNAc...) asparagine) is linked at N81. H117 and H119 together coordinate Zn(2+). D120 lines the substrate pocket. N132 is a glycosylation site (N-linked (GlcNAc...) asparagine). A disulfide bridge connects residues C142 and C163. N188 is a glycosylation site (N-linked (GlcNAc...) asparagine). Residues 207–214 (WVRFNKYF) and G329 each bind substrate. N-linked (GlcNAc...) asparagine glycosylation is present at N334. H361 is a Zn(2+) binding site. Residue E364 is the Proton donor of the active site. The active-site Proton acceptor is H389. D446 serves as a coordination point for Zn(2+). D447 lines the substrate pocket.

This sequence belongs to the metallo-dependent hydrolases superfamily. Adenosine and AMP deaminases family. ADGF subfamily. Zn(2+) is required as a cofactor. As to expression, detected in egg cordons and in the developing central nervous system. Not detected in adult central nervous system (at protein level). Atrial gland.

It localises to the secreted. The enzyme catalyses adenosine + H2O + H(+) = inosine + NH4(+). In terms of biological role, adenosine deaminase that may contribute to the degradation of extracellular adenosine, a signaling molecule that controls a variety of cellular responses. May play a role in the regulation of cell proliferation. In Aplysia californica (California sea hare), this protein is Adenosine deaminase AGSA.